A 133-amino-acid chain; its full sequence is DNA-directed RNA polymerase subunit omega (133 aa).

This sequence belongs to the RNA polymerase subunit omega family. The RNAP catalytic core consists of 2 alpha, 1 beta, 1 beta' and 1 omega subunit. When a sigma factor is associated with the core the holoenzyme is formed, which can initiate transcription.

The catalysed reaction is RNA(n) + a ribonucleoside 5'-triphosphate = RNA(n+1) + diphosphate. Functionally, promotes RNA polymerase assembly. Latches the N- and C-terminal regions of the beta' subunit thereby facilitating its interaction with the beta and alpha subunits. The chain is DNA-directed RNA polymerase subunit omega from Brucella canis (strain ATCC 23365 / NCTC 10854 / RM-666).